A 459-amino-acid chain; its full sequence is MLKIYNSITRQKQEFKPINPGKVGMYVCGVTVYDLCHIGHGRTFVSFDMIVRYLRYAGYEVNFQRNITDIDDKIIKRANENQEDCNTLTDRLIGEMHKDFDALNMKRPDFEPRATLHIAEIIDMVERLLARGHAYVAADGDVLFSVASFPEYGRLSGQNLEQLQAGARVEVDDNKQNPMDFVLWKMSKPGEPTWESPWGPGRPGWHIECSAMNSKHLGLHFDIHGGGSDLQFPHHENEIAQSCCAHDTPYVNYWMHTGMVMIDREKMSKSLGNFFTIRDVLSHYDAETVRYFLLSGHYRSQINYSEENLKQARAALERLYTAIKDVDLTVAAAPAEEFVAKFKAAMDDDFNTPEAYSVLFDMVREINRLKLTDMAEASALAVSMKQLADVLGLLHQSPDAFFKGEGSDDEVAEIEALIVERNRARTEKDWPAADVARNRLNELGVVLEDGPSGTTWRKK.

Zn(2+) is bound at residue C28. The 'HIGH' region motif lies at 30–40 (VTVYDLCHIGH). Zn(2+) contacts are provided by C209, H234, and E238. Positions 266–270 (KMSKS) match the 'KMSKS' region motif. K269 serves as a coordination point for ATP.

The protein belongs to the class-I aminoacyl-tRNA synthetase family. As to quaternary structure, monomer. It depends on Zn(2+) as a cofactor.

The protein localises to the cytoplasm. It carries out the reaction tRNA(Cys) + L-cysteine + ATP = L-cysteinyl-tRNA(Cys) + AMP + diphosphate. In Shewanella oneidensis (strain ATCC 700550 / JCM 31522 / CIP 106686 / LMG 19005 / NCIMB 14063 / MR-1), this protein is Cysteine--tRNA ligase.